The chain runs to 365 residues: Mitochondrial protein C2orf69 homolog (365 aa).

Residues 1 to 24 constitute a mitochondrion transit peptide; that stretch reads MLGSRRLRSPALVLLLLRPLLASG. Residues 28-64 are disordered; the sequence is SRLQTRAMNPGGGERGSPEDSHRLQRSTVPGSDPQRS. The span at 53-64 shows a compositional bias: polar residues; sequence RSTVPGSDPQRS.

It belongs to the C2orf69 family.

It localises to the mitochondrion matrix. Its function is as follows. May play a role in the respiratory chain. The protein is Mitochondrial protein C2orf69 homolog of Mus musculus (Mouse).